The chain runs to 304 residues: Murein tetrapeptide carboxypeptidase (304 aa).

Serine 106 functions as the Nucleophile in the catalytic mechanism. Active-site charge relay system residues include glutamate 200 and histidine 270.

Belongs to the peptidase S66 family.

Its subcellular location is the cytoplasm. It carries out the reaction N-acetyl-D-glucosaminyl-N-acetylmuramoyl-L-alanyl-meso-2,6-diaminoheptanedioyl-D-alanine + H2O = N-acetyl-D-glucosaminyl-N-acetylmuramoyl-L-alanyl-meso-2,6-diaminoheptanedioate + D-alanine. It participates in cell wall biogenesis; peptidoglycan recycling. Functionally, releases the terminal D-alanine residue from the cytoplasmic tetrapeptide recycling product L-Ala-gamma-D-Glu-meso-Dap-D-Ala. Can also cleave D-Ala from murein derivatives containing the tetrapeptide, i.e. MurNAc-tetrapeptide, UDP-MurNAc-tetrapeptide, GlcNAc-MurNAc-tetrapeptide, and GlcNAc-anhMurNAc-tetrapeptide. Does not act on murein sacculi or cross-linked muropeptides. The tripeptides produced by the LcdA reaction can then be reused as peptidoglycan building blocks; LcdA is thereby involved in murein recycling. The polypeptide is Murein tetrapeptide carboxypeptidase (ldcA) (Escherichia coli O157:H7).